Here is a 1009-residue protein sequence, read N- to C-terminus: Probable beta-galactosidase B (1009 aa).

The N-terminal stretch at 1 to 21 is a signal peptide; it reads MAQLFTKIIVYFLLFASPLLA. Residue Asn28 is glycosylated (N-linked (GlcNAc...) asparagine). Substrate is bound at residue Tyr85. The N-linked (GlcNAc...) asparagine glycan is linked to Asn95. Residues Asn130, Ala131, Glu132, and Asn190 each coordinate substrate. The active-site Proton donor is the Glu191. Asn247 carries N-linked (GlcNAc...) asparagine glycosylation. Tyr260 is a binding site for substrate. An intrachain disulfide couples Cys266 to Cys319. Residue Glu303 is the Nucleophile of the active site. Residue Tyr368 participates in substrate binding. Asn375, Asn406, Asn427, Asn451, Asn682, Asn740, Asn771, Asn784, Asn826, and Asn883 each carry an N-linked (GlcNAc...) asparagine glycan.

The protein belongs to the glycosyl hydrolase 35 family.

It localises to the secreted. It catalyses the reaction Hydrolysis of terminal non-reducing beta-D-galactose residues in beta-D-galactosides.. Functionally, cleaves beta-linked terminal galactosyl residues from gangliosides, glycoproteins, and glycosaminoglycans. In Talaromyces marneffei (strain ATCC 18224 / CBS 334.59 / QM 7333) (Penicillium marneffei), this protein is Probable beta-galactosidase B (lacB).